The following is a 721-amino-acid chain: Tripartite terminase subunit 1 (721 aa).

The C3H1-type zinc finger occupies 189–217 (CLKCYEELSLVPNQGKSIRKRLAGKFCNH). Residue 625 to 632 (YNDVFGKQ) participates in ATP binding.

This sequence belongs to the herpesviridae TRM1 protein family. As to quaternary structure, associates with TRM2 and TRM3 to form the tripartite terminase complex. Interacts with portal protein.

Its subcellular location is the host nucleus. Its function is as follows. Component of the molecular motor that translocates viral genomic DNA in empty capsid during DNA packaging. Forms a tripartite terminase complex together with TRM2 and TRM3 in the host cytoplasm. Once the complex reaches the host nucleus, it interacts with the capsid portal vertex. This portal forms a ring in which genomic DNA is translocated into the capsid. TRM1 carries an endonuclease activity that plays an important role for the cleavage of concatemeric viral DNA into unit length genomes. The polypeptide is Tripartite terminase subunit 1 (Homo sapiens (Human)).